The sequence spans 300 residues: N-acetylmannosamine kinase (300 aa).

ATP-binding positions include 5–12 (ALDIGGTK) and 132–139 (GVGGGIVL). Zn(2+) is bound by residues histidine 156, cysteine 166, cysteine 168, and cysteine 173.

It belongs to the ROK (NagC/XylR) family. NanK subfamily. In terms of assembly, homodimer.

The enzyme catalyses an N-acyl-D-mannosamine + ATP = an N-acyl-D-mannosamine 6-phosphate + ADP + H(+). It functions in the pathway amino-sugar metabolism; N-acetylneuraminate degradation; D-fructose 6-phosphate from N-acetylneuraminate: step 2/5. Its function is as follows. Catalyzes the phosphorylation of N-acetylmannosamine (ManNAc) to ManNAc-6-P. This chain is N-acetylmannosamine kinase, found in Haemophilus influenzae (strain 86-028NP).